The following is a 407-amino-acid chain: MPAPLFLSGPCEICGQKTSGRHFGVMSCRSCAAFFRRAATCSRIFGRCPNGNCKLLENGKFKCKKCRMKRCLEVGMDETKFQCNRDLISSSNKFQKRVSLIEPPPQSLSTFLGRPTLLLCCEPTRASHIKTLINVTYMVDVARDILKRDVSTKIPYQFHNSLERLALSLEEIRSREPDEKIKMLRKIGQEESLLIWEQAFLRAVEWFSNFSEFNALDELSKMTILKSAWISWTRLEKLAETADHQRKKIFGDSVMMCGNDACLDLANYEVDLTWCTNYTTEQLLFYLSPEIEQNHFLSLQELVELNPTSTELSYMLLQITLHLAGKKAQGQLLEITEMLLEAQGNHLHEYYVKKLKMPNYVMRLAKLMKINRRIESDMRDRVEKNHIARIFNILKVEFSEPDMFEST.

An NR C4-type zinc finger spans residues 11–31 (CEICGQKTSGRHFGVMSCRSC). The segment at 47 to 66 (RCPNGNCKLLENGKFKCKKC) adopts an NR C4-type; degenerate zinc-finger fold. Residues 157–407 (QFHNSLERLA…FSEPDMFEST (251 aa)) form the NR LBD domain.

The protein belongs to the nuclear hormone receptor family.

Its subcellular location is the nucleus. Its function is as follows. Orphan nuclear receptor. This Caenorhabditis elegans protein is Nuclear hormone receptor family member nhr-134 (nhr-134).